Here is a 501-residue protein sequence, read N- to C-terminus: Carboxypeptidase 1 (501 aa).

One can recognise a Peptidase M32 domain in the interval 3–496; the sequence is IHTYEKEFFD…LIDYLSNKYS (494 aa). An HPF motif is present at residues 234–236; the sequence is HPF. The short motif at 244–248 is the DXRXT element; sequence DVRVT. Position 265 (H265) interacts with Zn(2+). The short motif at 265–269 is the HEXXH element; it reads HECGH. The Proton donor/acceptor role is filled by E266. Positions 269 and 295 each coordinate Zn(2+). The short motif at 294 to 297 is the HES/GQ element; the sequence is HESQ. The I/NRXXA/SD motif lies at 347–352; that stretch reads IRVEAD. Residues 402-409 carry the GXXQDXHW motif; it reads GILQDVHW.

Belongs to the peptidase M32 family. In terms of assembly, homodimer. Zn(2+) is required as a cofactor.

The catalysed reaction is Release of a C-terminal amino acid with broad specificity, except for -Pro.. Its function is as follows. Broad specificity carboxypetidase that releases amino acids sequentially from the C-terminus, including neutral, aromatic, polar and basic residues. Has lower activity with substrates ending with His or Trp. The chain is Carboxypeptidase 1 (ypwA) from Bacillus subtilis (strain 168).